The chain runs to 282 residues: uncharacterized protein (282 aa).

Residues 1 to 18 (MIDLLVILVSLLFGVVWY) form the signal peptide.

This sequence belongs to the IIV-6 213R family.

This is an uncharacterized protein from Aedes vexans (Inland floodwater mosquito).